Here is a 248-residue protein sequence, read N- to C-terminus: MALLEICCYSMECALTAQQNGADRVELCAAPKEGGLTPSLGVLKSVRQRVTIPVHPIIRPRGGDFCYSDGEFAAILEDVRTVRELGFPGLVTGVLDVDGNVDMPRMEKIMAAAGPLAVTFHRAFDMCANPLNTLNNLAELGITRVLTSGQKSDALQGLSKIMELIAHGDAPIIMAGAGIRAENLHHFLDAGVLEVHSSAGAWQASPMRYRNQGLSMSSDAHADEYSRYVVDGAAVAEMKGIIERHQAK.

It belongs to the CutC family. As to quaternary structure, homodimer.

The protein localises to the cytoplasm. The polypeptide is PF03932 family protein CutC (Escherichia coli (strain SMS-3-5 / SECEC)).